Here is a 679-residue protein sequence, read N- to C-terminus: Glycine--tRNA ligase beta subunit (679 aa).

This sequence belongs to the class-II aminoacyl-tRNA synthetase family. In terms of assembly, tetramer of two alpha and two beta subunits.

It is found in the cytoplasm. The catalysed reaction is tRNA(Gly) + glycine + ATP = glycyl-tRNA(Gly) + AMP + diphosphate. This chain is Glycine--tRNA ligase beta subunit, found in Streptococcus pyogenes serotype M1.